The primary structure comprises 908 residues: Protein translocase subunit SecA (908 aa).

Residues Gln87, 105 to 109 (GEGKT), and Asp512 each bind ATP. The interval 882 to 908 (DGEKVGRNDPCPCGSGKKYKQCHGKLT) is disordered. The Zn(2+) site is built by Cys892, Cys894, Cys903, and His904. Residues 898–908 (KKYKQCHGKLT) are compositionally biased toward basic residues.

It belongs to the SecA family. In terms of assembly, monomer and homodimer. Part of the essential Sec protein translocation apparatus which comprises SecA, SecYEG and auxiliary proteins SecDF-YajC and YidC. The cofactor is Zn(2+).

The protein resides in the cell inner membrane. Its subcellular location is the cytoplasm. It catalyses the reaction ATP + H2O + cellular proteinSide 1 = ADP + phosphate + cellular proteinSide 2.. Part of the Sec protein translocase complex. Interacts with the SecYEG preprotein conducting channel. Has a central role in coupling the hydrolysis of ATP to the transfer of proteins into and across the cell membrane, serving both as a receptor for the preprotein-SecB complex and as an ATP-driven molecular motor driving the stepwise translocation of polypeptide chains across the membrane. This chain is Protein translocase subunit SecA, found in Shewanella amazonensis (strain ATCC BAA-1098 / SB2B).